The sequence spans 223 residues: Phosphoglycolate phosphatase (223 aa).

Asp-10 functions as the Nucleophile in the catalytic mechanism. Mg(2+)-binding residues include Asp-10 and Asp-12. Lys-149 contacts substrate. The Mg(2+) site is built by Asp-172 and Asp-176.

Belongs to the archaeal SPP-like hydrolase family. Mg(2+) is required as a cofactor.

It catalyses the reaction 2-phosphoglycolate + H2O = glycolate + phosphate. Functionally, catalyzes the dephosphorylation of 2-phosphoglycolate. The chain is Phosphoglycolate phosphatase from Archaeoglobus fulgidus (strain ATCC 49558 / DSM 4304 / JCM 9628 / NBRC 100126 / VC-16).